The following is a 104-amino-acid chain: MSHTILLVQPTKRPEGRTYADYESVNECMEGVCKMYEEHLKRMNPNSPSITYDISQLFDFVDDLADLSCLVYRADTQTYQPYNKDWIKEKIYVLLRRQAQQAGK.

Belongs to the E(R) family. Homodimer.

The protein resides in the nucleus. Its function is as follows. May have a role in the cell cycle. The polypeptide is Enhancer of rudimentary homolog (erh) (Danio rerio (Zebrafish)).